We begin with the raw amino-acid sequence, 681 residues long: METLQMKEAALVYLDRSGGLQKFIDDCKSYNDSKQSYAVYRFSILIDPCDVVELDADLGNHILHHPLKAARVFQSVCFVAVKTLSLIGQLQTETQINIVLKLTHLPALPSYTLDLCEFPLNYASQRFYMMQGIVIAMTTITKYTQGARFLCSDGVCPLSKGFQYVRVHVPGATESATVRNDFLCSLCSSSLQEDRKFRVLGDKQIVEIITTKMFHAFQGDSKNQPFRFQSLGIFLRDELVNKMKIGNEYKIIGIPVCVKTSQTALCVEANNITPHTAKVPLGISDNFRRLLSLTSSSCWKFTAMLANVFASQIVAPGTYNLLKLCLLMSLVQTRDCNREREDCLDILVITSDTLLVDRLLNFSMNLVSRGIRHPVCTEVFPTVSRNKYGTGAVSIQAGSALLAKGGICFIGDLTSHKKDKLEQLQSALESRSVTVFIPGKKFGDDFDQQMTFPIQCSFWSFVDMDSSSRRNVQKTSTLIGQMDCSLIPANLAEAFGLLINCSEASPCHPLLPTVQHTLKKAVEPEGLLYLASKQFTTEDFEKLLAFAKSLNMEFSLEAERMIHGYYLASRRIRTDSIHGSKLSASALKYLVSLSEAHARLSLRTTVLREDALIAALLLEISLTLRYGATPFCVAPNALFPFELYNEEYLEQRDLYLTQCQQQLQQFIATCGPGTTVFSSDE.

Serine 292 bears the Phosphoserine mark. One can recognise an MCM domain in the interval 533–621 (KQFTTEDFEK…LIAALLLEIS (89 aa)).

As to expression, predominantly expressed in the gonads and the brain. Not detected in the heart, lung, nor embryonic fibroblasts.

Plays an important role in meiotic recombination and associated DNA double-strand break repair. The chain is Minichromosome maintenance domain-containing protein 2 (Mcmdc2) from Mus musculus (Mouse).